We begin with the raw amino-acid sequence, 122 residues long: Basic phospholipase A2 PLA-B (122 aa).

Disulfide bonds link cysteine 26–cysteine 115, cysteine 28–cysteine 44, cysteine 43–cysteine 95, cysteine 49–cysteine 122, cysteine 50–cysteine 88, cysteine 57–cysteine 81, and cysteine 75–cysteine 86. 3 residues coordinate Ca(2+): tyrosine 27, glycine 29, and glycine 31. The active site involves histidine 47. Residue aspartate 48 coordinates Ca(2+). Aspartate 89 is a catalytic residue.

Belongs to the phospholipase A2 family. Group II subfamily. D49 sub-subfamily. Ca(2+) serves as cofactor. Expressed by the venom gland.

It localises to the secreted. The enzyme catalyses a 1,2-diacyl-sn-glycero-3-phosphocholine + H2O = a 1-acyl-sn-glycero-3-phosphocholine + a fatty acid + H(+). Snake venom phospholipase A2 (PLA2) that displays edema-inducing activities. PLA-B is three times more active than PLA-A in edema-inducing activities. PLA2 catalyzes the calcium-dependent hydrolysis of the 2-acyl groups in 3-sn-phosphoglycerides. The protein is Basic phospholipase A2 PLA-B of Protobothrops flavoviridis (Habu).